The primary structure comprises 267 residues: uncharacterized protein (267 aa).

It to S.pombe SpAC18G6.12c.

This is an uncharacterized protein from Schizosaccharomyces pombe (strain 972 / ATCC 24843) (Fission yeast).